A 120-amino-acid chain; its full sequence is NAD(P)H-quinone oxidoreductase subunit 3, chloroplastic (120 aa).

3 helical membrane passes run 7–27 (YDSF…AFSI), 63–83 (YMFA…YPWA), and 89–109 (LGLF…VGLV).

This sequence belongs to the complex I subunit 3 family. NDH is composed of at least 16 different subunits, 5 of which are encoded in the nucleus.

The protein localises to the plastid. It is found in the chloroplast thylakoid membrane. It catalyses the reaction a plastoquinone + NADH + (n+1) H(+)(in) = a plastoquinol + NAD(+) + n H(+)(out). The enzyme catalyses a plastoquinone + NADPH + (n+1) H(+)(in) = a plastoquinol + NADP(+) + n H(+)(out). Its function is as follows. NDH shuttles electrons from NAD(P)H:plastoquinone, via FMN and iron-sulfur (Fe-S) centers, to quinones in the photosynthetic chain and possibly in a chloroplast respiratory chain. The immediate electron acceptor for the enzyme in this species is believed to be plastoquinone. Couples the redox reaction to proton translocation, and thus conserves the redox energy in a proton gradient. This Adiantum capillus-veneris (Maidenhair fern) protein is NAD(P)H-quinone oxidoreductase subunit 3, chloroplastic.